A 145-amino-acid polypeptide reads, in one-letter code: Regulator of sigma D (145 aa).

It belongs to the Rsd/AlgQ family. In terms of assembly, interacts with RpoD.

The protein localises to the cytoplasm. In terms of biological role, binds RpoD and negatively regulates RpoD-mediated transcription activation by preventing the interaction between the primary sigma factor RpoD with the catalytic core of the RNA polymerase and with promoter DNA. May be involved in replacement of the RNA polymerase sigma subunit from RpoD to RpoS during the transition from exponential growth to the stationary phase. In Sodalis glossinidius (strain morsitans), this protein is Regulator of sigma D.